Consider the following 91-residue polypeptide: Small ribosomal subunit protein bS20 (91 aa).

It belongs to the bacterial ribosomal protein bS20 family.

In terms of biological role, binds directly to 16S ribosomal RNA. This is Small ribosomal subunit protein bS20 from Caulobacter sp. (strain K31).